Consider the following 265-residue polypeptide: Undecaprenyl-diphosphatase (265 aa).

Transmembrane regions (helical) follow at residues 7–27 (VIVSIIIGVIEGITEFLPISS), 45–65 (TKILEIFIEFGSALSILYFFH), 86–106 (LHILLAILPTIFFGLLFYKKI), 108–128 (LLFNTYNVMYALILGGIFLLI), 145–165 (ISLLQSAIIGFFQIFCLYPGF), 186–206 (IEFSFIISIPLIMGASFYDFI), 214–234 (ILDLPIFFIGFMISFIVSILC), and 245–265 (TSLIFFGIYRFIISGLIYFIN).

It belongs to the UppP family.

The protein localises to the cell membrane. The catalysed reaction is di-trans,octa-cis-undecaprenyl diphosphate + H2O = di-trans,octa-cis-undecaprenyl phosphate + phosphate + H(+). Its function is as follows. Catalyzes the dephosphorylation of undecaprenyl diphosphate (UPP). Confers resistance to bacitracin. The protein is Undecaprenyl-diphosphatase of Buchnera aphidicola subsp. Acyrthosiphon pisum (strain 5A).